We begin with the raw amino-acid sequence, 390 residues long: Transforming growth factor beta-1 proprotein (390 aa).

Positions 1–29 are cleaved as a signal peptide; the sequence is MPPSGLRLLPLLLPLLWLLMLTPGRPVAG. A straightjacket domain region spans residues 30 to 74; that stretch reads LSTCKTIDMELVKRKGIEAIRGQILSKLRLASPPSQGDVPPGPLP. The arm domain stretch occupies residues 75-271; it reads EAILALYNST…ATPLERAQHL (197 aa). N-linked (GlcNAc...) asparagine glycosylation is found at N82, N136, and N176. Residues 226-252 are bowtie tail; the sequence is DSKDNTLQVDINGFSSGRRGDLATIHG. Positions 244–246 match the Cell attachment site motif; it reads RGD. 4 disulfide bridges follow: C285–C294, C293–C356, C322–C387, and C326–C389.

Belongs to the TGF-beta family. As to quaternary structure, homodimer; disulfide-linked. Interacts with the serine proteases, HTRA1 and HTRA3: the interaction with either inhibits TGFB1-mediated signaling and the HTRA protease activity is required for this inhibition. May interact with THSD4; this interaction may lead to sequestration by FBN1 microfibril assembly and attenuation of TGFB signaling. Interacts with CD109, DPT and ASPN. Interacts with EFEMP2. Interacts with TSKU; the interaction contributes to regulation of the hair cycle. Interacts with TGFBR3. Homodimer; disulfide-linked. Interacts with transforming growth factor beta-1 (TGF-beta-1) chain; interaction is non-covalent and maintains TGF-beta-1 in a latent state; each latency-associated peptide (LAP) monomer interacts with TGF-beta-1 in the other monomer. Interacts with LTBP1; leading to regulation of TGF-beta-1 activation. Interacts with LRRC32/GARP; leading to regulation of TGF-beta-1 activation on the surface of activated regulatory T-cells (Tregs). Interacts with LRRC33/NRROS; leading to regulation of TGF-beta-1 activation in macrophages and microglia. Interacts (via cell attachment site) with integrins ITGAV and ITGB6 (ITGAV:ITGB6), leading to release of the active TGF-beta-1. Interacts with NREP; the interaction results in a decrease in TGFB1 autoinduction. Interacts with HSP90AB1; inhibits latent TGFB1 activation. In terms of assembly, homodimer; disulfide-linked. Interacts with TGF-beta receptors (TGFBR1 and TGFBR2), leading to signal transduction. Post-translationally, transforming growth factor beta-1 proprotein: The precursor proprotein is cleaved in the Golgi apparatus by FURIN to form Transforming growth factor beta-1 (TGF-beta-1) and Latency-associated peptide (LAP) chains, which remain non-covalently linked, rendering TGF-beta-1 inactive. In terms of processing, N-glycosylated. Deglycosylation leads to activation of Transforming growth factor beta-1 (TGF-beta-1); mechanisms triggering deglycosylation-driven activation of TGF-beta-1 are however unclear.

It is found in the secreted. It localises to the extracellular space. The protein resides in the extracellular matrix. Its function is as follows. Transforming growth factor beta-1 proprotein: Precursor of the Latency-associated peptide (LAP) and Transforming growth factor beta-1 (TGF-beta-1) chains, which constitute the regulatory and active subunit of TGF-beta-1, respectively. Required to maintain the Transforming growth factor beta-1 (TGF-beta-1) chain in a latent state during storage in extracellular matrix. Associates non-covalently with TGF-beta-1 and regulates its activation via interaction with 'milieu molecules', such as LTBP1, LRRC32/GARP and LRRC33/NRROS, that control activation of TGF-beta-1. Interaction with LRRC33/NRROS regulates activation of TGF-beta-1 in macrophages and microglia. Interaction with LRRC32/GARP controls activation of TGF-beta-1 on the surface of activated regulatory T-cells (Tregs). Interaction with integrins (ITGAV:ITGB6 or ITGAV:ITGB8) results in distortion of the Latency-associated peptide chain and subsequent release of the active TGF-beta-1. In terms of biological role, multifunctional protein that regulates the growth and differentiation of various cell types and is involved in various processes, such as normal development, immune function, microglia function and responses to neurodegeneration. Activation into mature form follows different steps: following cleavage of the proprotein in the Golgi apparatus, Latency-associated peptide (LAP) and Transforming growth factor beta-1 (TGF-beta-1) chains remain non-covalently linked rendering TGF-beta-1 inactive during storage in extracellular matrix. At the same time, LAP chain interacts with 'milieu molecules', such as LTBP1, LRRC32/GARP and LRRC33/NRROS that control activation of TGF-beta-1 and maintain it in a latent state during storage in extracellular milieus. TGF-beta-1 is released from LAP by integrins (ITGAV:ITGB6 or ITGAV:ITGB8): integrin-binding to LAP stabilizes an alternative conformation of the LAP bowtie tail and results in distortion of the LAP chain and subsequent release of the active TGF-beta-1. Once activated following release of LAP, TGF-beta-1 acts by binding to TGF-beta receptors (TGFBR1 and TGFBR2), which transduce signal. While expressed by many cells types, TGF-beta-1 only has a very localized range of action within cell environment thanks to fine regulation of its activation by Latency-associated peptide chain (LAP) and 'milieu molecules'. Plays an important role in bone remodeling: acts as a potent stimulator of osteoblastic bone formation, causing chemotaxis, proliferation and differentiation in committed osteoblasts. Can promote either T-helper 17 cells (Th17) or regulatory T-cells (Treg) lineage differentiation in a concentration-dependent manner. At high concentrations, leads to FOXP3-mediated suppression of RORC and down-regulation of IL-17 expression, favoring Treg cell development. At low concentrations in concert with IL-6 and IL-21, leads to expression of the IL-17 and IL-23 receptors, favoring differentiation to Th17 cells. Stimulates sustained production of collagen through the activation of CREB3L1 by regulated intramembrane proteolysis (RIP). Mediates SMAD2/3 activation by inducing its phosphorylation and subsequent translocation to the nucleus. Positively regulates odontoblastic differentiation in dental papilla cells, via promotion of IPO7-mediated translocation of phosphorylated SMAD2 to the nucleus and subsequent transcription of target genes. Can induce epithelial-to-mesenchymal transition (EMT) and cell migration in various cell types. The polypeptide is Transforming growth factor beta-1 proprotein (TGFB1) (Ovis aries (Sheep)).